The following is a 2531-amino-acid chain: Neurogenic locus notch homolog protein 1 (2531 aa).

Positions Met1–Ala18 are cleaved as a signal peptide. Topologically, residues Ala19–His1725 are extracellular. EGF-like domains are found at residues Arg20–Gln58, Asp59–Leu99, Leu102–Gln139, and Gln140–Arg176. 32 cysteine pairs are disulfide-bonded: Cys24/Cys37, Cys31/Cys46, Cys63/Cys74, Cys68/Cys87, Cys89/Cys98, Cys106/Cys117, Cys111/Cys127, Cys129/Cys138, Cys144/Cys155, Cys149/Cys164, Cys166/Cys175, Cys182/Cys195, Cys189/Cys204, Cys206/Cys215, Cys222/Cys233, Cys227/Cys243, Cys245/Cys254, Cys261/Cys272, Cys266/Cys281, Cys283/Cys292, Cys299/Cys312, Cys306/Cys321, Cys323/Cys332, Cys339/Cys350, Cys344/Cys359, Cys361/Cys370, Cys376/Cys387, Cys381/Cys398, Cys400/Cys409, Cys416/Cys429, Cys423/Cys438, and Cys440/Cys449. O-linked (Glc...) serine glycosylation occurs at Ser65. Residue Thr73 is glycosylated (O-linked (Fuc...) threonine). Thr116 carries an O-linked (Fuc...) threonine glycan. O-linked (Glc...) serine glycosylation occurs at Ser146. One can recognise an EGF-like 5; calcium-binding domain in the interval Asp178–Glu216. O-linked (Fuc...) threonine glycosylation occurs at Thr194. The EGF-like 6 domain maps to Pro218 to Glu255. O-linked (Fuc...) threonine; alternate glycosylation is present at Thr232. The O-linked (GalNAc...) threonine; alternate glycan is linked to Thr232. The EGF-like 7; calcium-binding domain occupies Asn257–Thr293. The region spanning Asp295–Ser333 is the EGF-like 8; calcium-binding domain. Thr311 carries an O-linked (Fuc...) threonine glycan. The EGF-like 9; calcium-binding domain occupies Asn335–His371. A glycan (O-linked (Glc...) serine) is linked at Ser341. Thr349 carries an O-linked (Fuc...) threonine glycan. An EGF-like 10; calcium-binding domain is found at Leu372–Ser410. Ser378 carries an O-linked (Glc...) serine glycan. Residues Asp412–Glu450 form the EGF-like 11; calcium-binding domain. An interaction with DLL4 region spans residues Ala420–Asn421. The Ca(2+) site is built by Thr432 and Ser435. O-linked (Glc...) serine glycosylation is present at Ser435. The tract at residues Arg448–Asp452 is interaction with DLL4. 3 residues coordinate Ca(2+): Asp452, Val453, and Glu455. One can recognise an EGF-like 12; calcium-binding domain in the interval Asp452–Glu488. Intrachain disulfides connect Cys456–Cys467, Cys461–Cys476, and Cys478–Cys487. Ser458 carries O-linked (Glc...) serine glycosylation. An O-linked (Fuc...) threonine glycan is attached at Thr466. Ca(2+) is bound by residues Asp469 and Gln470. Asn490, Thr491, and Glu493 together coordinate Ca(2+). In terms of domain architecture, EGF-like 13; calcium-binding spans Asn490–Gln526. 75 cysteine pairs are disulfide-bonded: Cys494–Cys505, Cys499–Cys514, Cys516–Cys525, Cys532–Cys543, Cys537–Cys552, Cys554–Cys563, Cys570–Cys580, Cys575–Cys589, Cys591–Cys600, Cys607–Cys618, Cys612–Cys627, Cys629–Cys638, Cys645–Cys655, Cys650–Cys664, Cys666–Cys675, Cys682–Cys693, Cys687–Cys702, Cys704–Cys713, Cys720–Cys730, Cys725–Cys739, Cys741–Cys750, Cys757–Cys768, Cys762–Cys777, Cys779–Cys788, Cys795–Cys806, Cys800–Cys815, Cys817–Cys826, Cys833–Cys844, Cys838–Cys855, Cys857–Cys866, Cys873–Cys884, Cys878–Cys893, Cys895–Cys904, Cys911–Cys922, Cys916–Cys931, Cys933–Cys942, Cys949–Cys960, Cys954–Cys969, Cys971–Cys980, Cys987–Cys998, Cys992–Cys1007, Cys1009–Cys1018, Cys1025–Cys1036, Cys1030–Cys1045, Cys1047–Cys1056, Cys1063–Cys1074, Cys1068–Cys1083, Cys1085–Cys1094, Cys1101–Cys1122, Cys1116–Cys1131, Cys1133–Cys1142, Cys1149–Cys1160, Cys1154–Cys1169, Cys1171–Cys1180, Cys1187–Cys1198, Cys1192–Cys1207, Cys1209–Cys1218, Cys1225–Cys1244, Cys1238–Cys1253, Cys1255–Cys1264, Cys1271–Cys1284, Cys1276–Cys1293, Cys1295–Cys1304, Cys1311–Cys1322, Cys1316–Cys1334, Cys1336–Cys1345, Cys1352–Cys1363, Cys1357–Cys1372, Cys1374–Cys1383, Cys1391–Cys1403, Cys1397–Cys1414, Cys1416–Cys1425, Cys1449–Cys1472, Cys1454–Cys1467, and Cys1463–Cys1479. Residue Ser496 is glycosylated (O-linked (Glc...) serine). Ca(2+) is bound by residues Asp507 and Lys508. The 37-residue stretch at Asp528–Glu564 folds into the EGF-like 14; calcium-binding domain. The O-linked (Glc...) serine glycan is linked to Ser534. An EGF-like 15; calcium-binding domain is found at Asp566–Glu601. The 37-residue stretch at Asn603–Glu639 folds into the EGF-like 16; calcium-binding domain. Residue Ser609 is glycosylated (O-linked (Glc...) serine). The O-linked (Fuc...) threonine glycan is linked to Thr617. In terms of domain architecture, EGF-like 17; calcium-binding spans Asn641 to Asn676. Residue Ser647 is glycosylated (O-linked (Glc...) serine). Residues Asn678–Leu714 form the EGF-like 18; calcium-binding domain. Thr692 carries an O-linked (Fuc...) threonine glycan. The 36-residue stretch at Glu716–Asp751 folds into the EGF-like 19; calcium-binding domain. A glycan (O-linked (Glc...) serine) is linked at Ser722. The 37-residue stretch at Asn753–Gln789 folds into the EGF-like 20; calcium-binding domain. Ser759 carries an O-linked (Glc...) serine glycan. Thr767 carries an O-linked (Fuc...) threonine glycan. Residue Ser784 is glycosylated (O-linked (GlcNAc) serine). The region spanning Asn791 to Glu827 is the EGF-like 21; calcium-binding domain. Ser797 is a glycosylation site (O-linked (Glc...) serine). O-linked (Fuc...) threonine glycosylation occurs at Thr805. The 39-residue stretch at Val829 to Glu867 folds into the EGF-like 22 domain. One can recognise an EGF-like 23; calcium-binding domain in the interval Asp869–Glu905. N-linked (GlcNAc...) asparagine glycosylation is present at Asn888. O-linked (GlcNAc) threonine glycosylation is present at Thr900. One can recognise an EGF-like 24 domain in the interval Asp907–Glu943. O-linked (Fuc) serine glycosylation is present at Ser921. The EGF-like 25; calcium-binding domain maps to Asp945–Glu981. Ser951 is a glycosylation site (O-linked (Glc...) serine). An N-linked (GlcNAc...) asparagine glycan is attached at Asn959. The 37-residue stretch at Asn983–Gln1019 folds into the EGF-like 26 domain. Thr997 is a glycosylation site (O-linked (Fuc...) threonine). The EGF-like 27; calcium-binding domain occupies Asp1021 to Gln1057. A glycan (O-linked (Glc...) serine) is linked at Ser1027. Thr1035 is a glycosylation site (O-linked (Fuc...) threonine). EGF-like domains are found at residues Leu1059–Asp1095 and Leu1097–Glu1143. A glycan (O-linked (Glc...) serine) is linked at Ser1065. The region spanning Glu1145–Ser1181 is the EGF-like 30; calcium-binding domain. O-linked (Fuc...) threonine glycosylation occurs at Thr1159. Residue Asn1179 is glycosylated (N-linked (GlcNAc...) asparagine). The region spanning Glu1183–Glu1219 is the EGF-like 31; calcium-binding domain. A glycan (O-linked (Glc...) serine) is linked at Ser1189. A glycan (O-linked (Fuc...) threonine) is linked at Thr1197. Residues Asn1221–Glu1265 form the EGF-like 32; calcium-binding domain. Residue Asn1241 is glycosylated (N-linked (GlcNAc...) asparagine). 4 consecutive EGF-like domains span residues Asp1267 to Glu1305, Val1307 to Glu1346, Asp1348 to Gln1384, and Ala1387 to His1426. Ser1273 is a glycosylation site (O-linked (Glc...) serine). An O-linked (Fuc...) threonine glycan is attached at Thr1362. Thr1379 carries O-linked (GlcNAc...) threonine glycosylation. The O-linked (Fuc...) threonine; alternate glycan is linked to Thr1402. The O-linked (GalNAc...) threonine; alternate glycan is linked to Thr1402. LNR repeat units lie at residues Cys1449–Asn1489, Cys1490–Leu1531, and Tyr1532–Ala1571. Ca(2+) is bound by residues Asp1457, Asn1460, Asp1475, and Asp1478. A glycan (N-linked (GlcNAc...) asparagine) is linked at Asn1489. 5 disulfides stabilise this stretch: Cys1490/Cys1514, Cys1496/Cys1509, Cys1505/Cys1521, Cys1536/Cys1549, and Cys1545/Cys1561. N-linked (GlcNAc...) asparagine glycosylation occurs at Asn1587. The segment at Pro1718–Arg1750 is interaction with PSEN1. A helical transmembrane segment spans residues Leu1726–Leu1746. The Cytoplasmic segment spans residues Ser1747–Lys2531. Residue Lys1749 forms a Glycyl lysine isopeptide (Lys-Gly) (interchain with G-Cter in ubiquitin) linkage. Residues Lys1770–Asp1798 form a disordered region. Residue Thr1851 is modified to Phosphothreonine. ANK repeat units follow at residues Thr1917 to Ile1946, Met1950 to Ala1980, Asp1984 to Ala2013, Leu2017 to Met2046, and Lys2050 to Ile2079. An HIF1AN-binding region spans residues Leu1937–Asn1945. At Asn1945 the chain carries (3S)-3-hydroxyasparagine; by HIF1AN; partial. The segment at Leu2004 to Asn2012 is HIF1AN-binding. Asn2012 carries the post-translational modification (3S)-3-hydroxyasparagine; by HIF1AN; partial. Disordered stretches follow at residues Lys2140 to Ser2185, Gln2382 to Val2428, and Pro2440 to Lys2531. A compositionally biased stretch (low complexity) spans Gln2382–Ser2395. The span at Pro2440–Leu2478 shows a compositional bias: polar residues. Over residues Pro2488–Ser2503 the composition is skewed to low complexity. A compositionally biased stretch (polar residues) spans Asn2504–Thr2524.

It belongs to the NOTCH family. Heterodimer of a C-terminal fragment N(TM) and an N-terminal fragment N(EC) which are probably linked by disulfide bonds. Interacts with DNER, DTX1, DTX2 and RBPJ/RBPSUH. Also interacts with MAML1, MAML2 and MAML3 which act as transcriptional coactivators for NOTCH1. Notch 1 intracellular domain interacts with SNW1; the interaction involves multimerized NOTCH1 NICD and is implicated in a formation of an intermediate preactivation complex which associates with DNA-bound CBF-1/RBPJ. The activated membrane-bound form interacts with AAK1 which promotes NOTCH1 stabilization. Forms a trimeric complex with FBXW7 and SGK1. Interacts with HIF1AN. HIF1AN negatively regulates the function of notch intracellular domain (NICD), accelerating myogenic differentiation. Interacts (via NICD) with SNAI1 (via zinc fingers); the interaction induces SNAI1 degradation via MDM2-mediated ubiquitination and inhibits SNAI1-induced cell invasion. Interacts (via NICD) with MDM2A. Interacts (via NICD) with BCL6; the interaction decreases MAML1 recruitment by NOTCH1 NICD on target genes DNA and inhibits NOTCH1 transactivation activity. Interacts with THBS4. Interacts (via the EGF-like repeat region) with CCN3 (via CTCK domain). Interacts (via EGF-like domains) with DLL4 (via N-terminal DSL and MNNL domains). Interacts with ZMIZ1. Interacts (via NICD domain) with MEGF10 (via the cytoplasmic domain). Interacts with DLL1 and JAG1. Interacts (via NICD domain) with PRAG1. Forms a complex with PRAG1, N1ICD and MAML1, in a MAML1-dependent manner. Interacts (via transmembrane region) with PSEN1; the interaction is direct. Interacts with ZFP64. In terms of processing, synthesized in the endoplasmic reticulum as an inactive form which is proteolytically cleaved by a furin-like convertase in the trans-Golgi network before it reaches the plasma membrane to yield an active, ligand-accessible form. Cleavage results in a C-terminal fragment N(TM) and a N-terminal fragment N(EC). Following ligand binding, it is cleaved by ADAM17 to yield a membrane-associated intermediate fragment called notch extracellular truncation (NEXT). Following endocytosis, this fragment is then cleaved by one of the catalytic subunits of gamma-secretase (PSEN1 or PSEN2) to release a Notch-derived peptide containing the intracellular domain (NICD) from the membrane. Phosphorylated. Post-translationally, O-linked glycosylation by GALNT11 is involved in determination of left/right symmetry: glycosylation promotes activation of NOTCH1, possibly by promoting cleavage by ADAM17, modulating the balance between motile and immotile (sensory) cilia at the left-right organiser (LRO). O-glycosylated on the EGF-like domains. O-glucosylated at Ser-435 by KDELC1 and KDELC2. Contains both O-linked fucose and O-linked glucose in the EGF-like domains 11, 12 and 13, which are interacting with the residues on DLL4. O-glycosylation at Ser-1027 is only partial. MFNG-, RFNG- and LFNG-mediated modification of O-fucose residues at specific EGF-like domains results in inhibition of its activation by JAG1 and enhancement of its activation by DLL1 via an increased binding to DLL1. In terms of processing, ubiquitinated. Undergoes 'Lys-29'-linked polyubiquitination by ITCH; promotes the lysosomal degradation of non-activated internalized NOTCH1. Deubiquitination by USP12 is required for transport of internalized non-activated receptor from late endosomes to lysosomes for degradation. Monoubiquitination at Lys-1749 is required for activation by gamma-secretase cleavage, it promotes interaction with AAK1, which stabilizes it. Deubiquitination by EIF3F is necessary for nuclear import of activated Notch. Hydroxylated at Asn-1945 and Asn-2012 by HIF1AN. Hydroxylation reduces affinity for HI1AN and may thus indirectly modulate negative regulation of NICD. Highly expressed in the brain, lung and thymus. Expressed at lower levels in the spleen, bone-marrow, spinal cord, eyes, mammary gland, liver, intestine, skeletal muscle, kidney and heart. In the hair follicle, highly expressed exclusively in the epithelial compartment.

It is found in the cell membrane. Its subcellular location is the late endosome membrane. The protein resides in the nucleus. Functionally, functions as a receptor for membrane-bound ligands Jagged-1 (JAG1), Jagged-2 (JAG2) and Delta-1 (DLL1) to regulate cell-fate determination. Upon ligand activation through the released notch intracellular domain (NICD) it forms a transcriptional activator complex with RBPJ/RBPSUH and activates genes of the enhancer of split locus. Affects the implementation of differentiation, proliferation and apoptotic programs. Involved in angiogenesis; negatively regulates endothelial cell proliferation and migration and angiogenic sprouting. Involved in the maturation of both CD4(+) and CD8(+) cells in the thymus. Important for follicular differentiation and possibly cell fate selection within the follicle. During cerebellar development, functions as a receptor for neuronal DNER and is involved in the differentiation of Bergmann glia. Represses neuronal and myogenic differentiation. May play an essential role in postimplantation development, probably in some aspect of cell specification and/or differentiation. May be involved in mesoderm development, somite formation and neurogenesis. May enhance HIF1A function by sequestering HIF1AN away from HIF1A. Required for the THBS4 function in regulating protective astrogenesis from the subventricular zone (SVZ) niche after injury. Involved in determination of left/right symmetry by modulating the balance between motile and immotile (sensory) cilia at the left-right organiser (LRO). The chain is Neurogenic locus notch homolog protein 1 (Notch1) from Mus musculus (Mouse).